We begin with the raw amino-acid sequence, 775 residues long: Lon protease (775 aa).

The 202-residue stretch at 6-207 (LPLMALRDIV…TIINILTSNI (202 aa)) folds into the Lon N-terminal domain. 356–363 (GPPGVGKT) lines the ATP pocket. Residues 592–773 (NDQIGSTTGL…DQVLEHALTK (182 aa)) enclose the Lon proteolytic domain. Catalysis depends on residues Ser679 and Lys722.

Belongs to the peptidase S16 family. As to quaternary structure, homohexamer. Organized in a ring with a central cavity.

It is found in the cytoplasm. The enzyme catalyses Hydrolysis of proteins in presence of ATP.. Functionally, ATP-dependent serine protease that mediates the selective degradation of mutant and abnormal proteins as well as certain short-lived regulatory proteins. Required for cellular homeostasis and for survival from DNA damage and developmental changes induced by stress. Degrades polypeptides processively to yield small peptide fragments that are 5 to 10 amino acids long. Binds to DNA in a double-stranded, site-specific manner. The chain is Lon protease from Rickettsia bellii (strain RML369-C).